The following is a 153-amino-acid chain: UPF0251 protein CT0950 (153 aa).

Belongs to the UPF0251 family.

This Chlorobaculum tepidum (strain ATCC 49652 / DSM 12025 / NBRC 103806 / TLS) (Chlorobium tepidum) protein is UPF0251 protein CT0950.